We begin with the raw amino-acid sequence, 35 residues long: Photosystem II reaction center protein T (35 aa).

A helical membrane pass occupies residues alanine 3–phenylalanine 23.

It belongs to the PsbT family. PSII is composed of 1 copy each of membrane proteins PsbA, PsbB, PsbC, PsbD, PsbE, PsbF, PsbH, PsbI, PsbJ, PsbK, PsbL, PsbM, PsbT, PsbY, PsbZ, Psb30/Ycf12, at least 3 peripheral proteins of the oxygen-evolving complex and a large number of cofactors. It forms dimeric complexes.

It localises to the plastid. Its subcellular location is the chloroplast thylakoid membrane. Found at the monomer-monomer interface of the photosystem II (PS II) dimer, plays a role in assembly and dimerization of PSII. PSII is a light-driven water plastoquinone oxidoreductase, using light energy to abstract electrons from H(2)O, generating a proton gradient subsequently used for ATP formation. The chain is Photosystem II reaction center protein T from Chaetosphaeridium globosum (Charophycean green alga).